The sequence spans 498 residues: Mitogen-activated protein kinase 15 (498 aa).

Residues 13 to 304 (YKIEEVIGKG…AEEALADPYF (292 aa)) form the Protein kinase domain. ATP-binding positions include 19–27 (IGKGSYGVV) and Lys-42. Catalysis depends on Asp-139, which acts as the Proton acceptor. The residue at position 175 (Thr-175) is a Phosphothreonine. A TXY motif is present at residues 175-177 (TDY). At Tyr-177 the chain carries Phosphotyrosine. Disordered stretches follow at residues 388 to 411 (STAAPPERQHNSLPRPSVLYSDDR) and 470 to 498 (STAEQYEHRRTDRNPALATNTVSPRGSYP). Residues 486 to 498 (LATNTVSPRGSYP) are compositionally biased toward polar residues.

This sequence belongs to the protein kinase superfamily. CMGC Ser/Thr protein kinase family. MAP kinase subfamily. Dually phosphorylated on Thr-175 and Tyr-177, which activates the enzyme.

It catalyses the reaction L-seryl-[protein] + ATP = O-phospho-L-seryl-[protein] + ADP + H(+). It carries out the reaction L-threonyl-[protein] + ATP = O-phospho-L-threonyl-[protein] + ADP + H(+). Activated by threonine and tyrosine phosphorylation. The sequence is that of Mitogen-activated protein kinase 15 (MPK15) from Oryza sativa subsp. japonica (Rice).